A 230-amino-acid chain; its full sequence is Sodium channel modifier 1 (230 aa).

The residue at position 2 (S2) is a Phosphoserine. Residues 4–20 carry the Bipartite nuclear localization signal motif; the sequence is KREGDDWSQLNVLKKRR. The Matrin-type zinc-finger motif lies at 42–74; it reads FACAICPHRPVLDTLAMLTAHRAGKKHLSSLQL. K67 participates in a covalent cross-link: Glycyl lysine isopeptide (Lys-Gly) (interchain with G-Cter in SUMO2). 3 disordered regions span residues 76-106, 129-186, and 200-230; these read YGKKQPGKERKQNPKHQNELRREETKAEAPL, RRKY…SPTR, and GWIPDGRGRWVKDENVEFDSDEEEPPDLPLD. Over residues 81–102 the composition is skewed to basic and acidic residues; it reads PGKERKQNPKHQNELRREETKA. S144 carries the post-translational modification Phosphoserine. Residues 164–174 are compositionally biased toward low complexity; the sequence is PAAGPQAEESA. Residue S183 is modified to Phosphoserine. The required for interaction with LUC7L2 stretch occupies residues 188-230; it reads RALDHYLTLRSSGWIPDGRGRWVKDENVEFDSDEEEPPDLPLD. A compositionally biased stretch (basic and acidic residues) spans 205-214; that stretch reads GRGRWVKDEN. Residues 215–230 show a composition bias toward acidic residues; it reads VEFDSDEEEPPDLPLD. S219 is modified (phosphoserine).

In terms of assembly, component of the minor spliceosome, which splices U12-type introns. Within this complex, interacts with RNF113A, as well as with SF3B1/SF3b155, SF3B2/SF3b145, SF3B3/SF3b130 and CDC5L. May interact with LUC7L2 and SNRNP70.

The protein resides in the nucleus. Its subcellular location is the nucleoplasm. It localises to the nucleus speckle. In terms of biological role, as a component of the minor spliceosome, involved in the splicing of U12-type introns in pre-mRNAs. Plays a role in the regulation of primary cilia length and Hedgehog signaling. In Homo sapiens (Human), this protein is Sodium channel modifier 1 (SCNM1).